Consider the following 389-residue polypeptide: Chalcone synthase 1 (389 aa).

C164 is an active-site residue.

This sequence belongs to the thiolase-like superfamily. Chalcone/stilbene synthases family.

The catalysed reaction is (E)-4-coumaroyl-CoA + 3 malonyl-CoA + 3 H(+) = 2',4,4',6'-tetrahydroxychalcone + 3 CO2 + 4 CoA. The protein operates within secondary metabolite biosynthesis; flavonoid biosynthesis. Its function is as follows. The primary product of this enzyme is 4,2',4',6'-tetrahydroxychalcone (also termed naringenin-chalcone or chalcone) which can under specific conditions spontaneously isomerize into naringenin. The sequence is that of Chalcone synthase 1 (CHS1) from Cicer arietinum (Chickpea).